The primary structure comprises 185 residues: Elongation factor P (185 aa).

It belongs to the elongation factor P family.

The protein localises to the cytoplasm. Its pathway is protein biosynthesis; polypeptide chain elongation. In terms of biological role, involved in peptide bond synthesis. Stimulates efficient translation and peptide-bond synthesis on native or reconstituted 70S ribosomes in vitro. Probably functions indirectly by altering the affinity of the ribosome for aminoacyl-tRNA, thus increasing their reactivity as acceptors for peptidyl transferase. This chain is Elongation factor P (efp), found in Thermotoga maritima (strain ATCC 43589 / DSM 3109 / JCM 10099 / NBRC 100826 / MSB8).